The following is a 450-amino-acid chain: MSRKYFGTDGVRGRVGTFPITPDFAMKLGWAAGKVLASTGTQEVLIGKDTRSSGYMLESAIEAGLSAAGVNVALIGPMPTPAVAYLASTFRADAGVVISASHNPFYDNGIKFFSNSGTKLNDQQELEIEALLDQALNHNAMECVSSELLGKVRRITDAAGRYIEFCKGVFAKDLTLAGLKIVVDSANGAAYHIAPNVYRELGAEVISINDKPNGTNINDHCGATHLDSLQTAVMVHEADLGIAMDGDADRVMFVDHNGHVVDGDQILYILAKSAKQQGTMTGGVVGTLMSNLGLEIALKEMDIPFKRAKVGDRYVVEQLKQTGWRIGGEGSGHILHLDHASTGDAVVASLLVLQAVLQSGQSLAEIVSCMKKLPQVLLNVRLTANNADEILASAAVKQAVIEAEAVLAENGRVLLRKSGTEPLIRVMVESTDPEMSQAQAEHIAKVVTSF.

Residue Ser-101 is the Phosphoserine intermediate of the active site. Mg(2+) is bound by residues Ser-101, Asp-245, Asp-247, and Asp-249. A Phosphoserine modification is found at Ser-101.

It belongs to the phosphohexose mutase family. It depends on Mg(2+) as a cofactor. Activated by phosphorylation.

It catalyses the reaction alpha-D-glucosamine 1-phosphate = D-glucosamine 6-phosphate. Its function is as follows. Catalyzes the conversion of glucosamine-6-phosphate to glucosamine-1-phosphate. The polypeptide is Phosphoglucosamine mutase 2 (Shewanella frigidimarina (strain NCIMB 400)).